The primary structure comprises 75 residues: Protein RegB (75 aa).

Required for optimal exotoxin A production. In Pseudomonas aeruginosa (strain ATCC 15692 / DSM 22644 / CIP 104116 / JCM 14847 / LMG 12228 / 1C / PRS 101 / PAO1), this protein is Protein RegB (regB).